The primary structure comprises 445 residues: Argininosuccinate synthase (445 aa).

ATP contacts are provided by residues 17–25 (AFSGGLDTS) and alanine 43. Tyrosine 99 lines the L-citrulline pocket. Residues glycine 129 and threonine 131 each contribute to the ATP site. Residues threonine 131, asparagine 135, and aspartate 136 each contribute to the L-aspartate site. Asparagine 135 provides a ligand contact to L-citrulline. Aspartate 136 is a binding site for ATP. The L-citrulline site is built by arginine 139 and serine 192. Aspartate 194 is a binding site for ATP. Positions 201, 203, and 280 each coordinate L-citrulline.

The protein belongs to the argininosuccinate synthase family. Type 2 subfamily. In terms of assembly, homotetramer.

Its subcellular location is the cytoplasm. It catalyses the reaction L-citrulline + L-aspartate + ATP = 2-(N(omega)-L-arginino)succinate + AMP + diphosphate + H(+). Its pathway is amino-acid biosynthesis; L-arginine biosynthesis; L-arginine from L-ornithine and carbamoyl phosphate: step 2/3. This is Argininosuccinate synthase from Ralstonia pickettii (strain 12J).